Consider the following 307-residue polypeptide: Ribonuclease Z (307 aa).

Residues H63, H65, D67, H68, H141, D212, and H270 each contribute to the Zn(2+) site. Catalysis depends on D67, which acts as the Proton acceptor.

The protein belongs to the RNase Z family. In terms of assembly, homodimer. Requires Zn(2+) as cofactor.

The catalysed reaction is Endonucleolytic cleavage of RNA, removing extra 3' nucleotides from tRNA precursor, generating 3' termini of tRNAs. A 3'-hydroxy group is left at the tRNA terminus and a 5'-phosphoryl group is left at the trailer molecule.. In terms of biological role, zinc phosphodiesterase, which displays some tRNA 3'-processing endonuclease activity. Probably involved in tRNA maturation, by removing a 3'-trailer from precursor tRNA. The sequence is that of Ribonuclease Z from Bacillus anthracis (strain A0248).